The sequence spans 318 residues: Transaldolase (318 aa).

K132 acts as the Schiff-base intermediate with substrate in catalysis.

Belongs to the transaldolase family. Type 1 subfamily. As to quaternary structure, homodimer.

The protein localises to the cytoplasm. It catalyses the reaction D-sedoheptulose 7-phosphate + D-glyceraldehyde 3-phosphate = D-erythrose 4-phosphate + beta-D-fructose 6-phosphate. It participates in carbohydrate degradation; pentose phosphate pathway; D-glyceraldehyde 3-phosphate and beta-D-fructose 6-phosphate from D-ribose 5-phosphate and D-xylulose 5-phosphate (non-oxidative stage): step 2/3. Transaldolase is important for the balance of metabolites in the pentose-phosphate pathway. In Shewanella sp. (strain ANA-3), this protein is Transaldolase.